We begin with the raw amino-acid sequence, 269 residues long: Probable sulfate transport system permease protein cysT (269 aa).

A run of 7 helical transmembrane segments spans residues 10-30 (SWRI…LALL), 60-80 (MALI…WILV), 92-112 (AAID…LATV), 130-150 (VVFT…PFVV), 179-199 (FWKV…ALAF), 208-228 (SVVI…VLIF), and 240-260 (TVIG…INII). One can recognise an ABC transmembrane type-1 domain in the interval 54 to 255 (YSITLSMALI…ILSISLFILV (202 aa)).

This sequence belongs to the binding-protein-dependent transport system permease family. CysTW subfamily.

It is found in the plastid. It localises to the chloroplast membrane. Its function is as follows. Part of the ABC transporter complex cysAWTP (TC 3.A.1.6.1) involved in sulfate/thiosulfate import. Probably responsible for the translocation of the substrate across the membrane. This chain is Probable sulfate transport system permease protein cysT (cysT), found in Mesostigma viride (Green alga).